Reading from the N-terminus, the 213-residue chain is Peroxiredoxin-5, mitochondrial (213 aa).

Residues 1 to 51 constitute a mitochondrion transit peptide; it reads MVQLRFCVLGSIAGSVLRASATWTCVAGRAGRKGAGWECGGARSFSSAAVT. The Thioredoxin domain maps to 55-213; it reads IKVGDTIPSV…SLAPNILSQL (159 aa). Position 74 is an N6-acetyllysine (Lys-74). N6-acetyllysine; alternate is present on Lys-82. N6-succinyllysine; alternate is present on Lys-82. The Cysteine sulfenic acid (-SOH) intermediate role is filled by Cys-99. The S-palmitoyl cysteine moiety is linked to residue Cys-99. Cys-99 and Cys-203 are joined by a disulfide. The residue at position 115 (Lys-115) is an N6-succinyllysine. Phosphoserine is present on residues Ser-170 and Ser-181. The short motif at 211–213 is the Microbody targeting signal element; that stretch reads SQL.

Belongs to the peroxiredoxin family. Prx5 subfamily. Monomer. S-palmitoylated. Palmitoylation occurs on the active site, inhibiting its reactivity; therefore PRDX5 palmitoylation status determines its antioxidant capacity. In terms of processing, S-palmitoylated. Depalmitoylated by ABHD10.

It localises to the mitochondrion. The protein resides in the cytoplasm. It is found in the peroxisome matrix. The catalysed reaction is a hydroperoxide + [thioredoxin]-dithiol = an alcohol + [thioredoxin]-disulfide + H2O. In terms of biological role, thiol-specific peroxidase that catalyzes the reduction of hydrogen peroxide and organic hydroperoxides to water and alcohols, respectively. Plays a role in cell protection against oxidative stress by detoxifying peroxides and as sensor of hydrogen peroxide-mediated signaling events. This chain is Peroxiredoxin-5, mitochondrial, found in Rattus norvegicus (Rat).